The primary structure comprises 382 residues: Lipid-A-disaccharide synthase (382 aa).

Belongs to the LpxB family.

The catalysed reaction is a lipid X + a UDP-2-N,3-O-bis[(3R)-3-hydroxyacyl]-alpha-D-glucosamine = a lipid A disaccharide + UDP + H(+). It participates in bacterial outer membrane biogenesis; LPS lipid A biosynthesis. Condensation of UDP-2,3-diacylglucosamine and 2,3-diacylglucosamine-1-phosphate to form lipid A disaccharide, a precursor of lipid A, a phosphorylated glycolipid that anchors the lipopolysaccharide to the outer membrane of the cell. This chain is Lipid-A-disaccharide synthase, found in Alteromonas mediterranea (strain DSM 17117 / CIP 110805 / LMG 28347 / Deep ecotype).